The following is a 394-amino-acid chain: Flavohemoprotein (394 aa).

The 138-residue stretch at 1-138 folds into the Globin domain; the sequence is MLTQEHINII…LAQVFIDREG (138 aa). Histidine 85 contributes to the heme b binding site. Catalysis depends on charge relay system residues tyrosine 95 and glutamate 137. Positions 149–394 are reductase; sequence GGWRDGRTFV…VFGPHAQLAA (246 aa). One can recognise an FAD-binding FR-type domain in the interval 152 to 262; that stretch reads RDGRTFVVRE…YAPAGDFFYV (111 aa). Residues tyrosine 190 and 206–209 contribute to the FAD site; that span reads RQYS. 274–279 is an NADP(+) binding site; the sequence is GVGATP. 385-388 is an FAD binding site; sequence VFGP.

The protein belongs to the globin family. Two-domain flavohemoproteins subfamily. In the C-terminal section; belongs to the flavoprotein pyridine nucleotide cytochrome reductase family. It depends on heme b as a cofactor. The cofactor is FAD.

The catalysed reaction is 2 nitric oxide + NADPH + 2 O2 = 2 nitrate + NADP(+) + H(+). It catalyses the reaction 2 nitric oxide + NADH + 2 O2 = 2 nitrate + NAD(+) + H(+). Is involved in NO detoxification in an aerobic process, termed nitric oxide dioxygenase (NOD) reaction that utilizes O(2) and NAD(P)H to convert NO to nitrate, which protects the bacterium from various noxious nitrogen compounds. Therefore, plays a central role in the inducible response to nitrosative stress. The polypeptide is Flavohemoprotein (hmp) (Vibrio cholerae serotype O1 (strain ATCC 39315 / El Tor Inaba N16961)).